Consider the following 65-residue polypeptide: Small ribosomal subunit protein bS21A (65 aa).

This sequence belongs to the bacterial ribosomal protein bS21 family.

In Francisella tularensis subsp. tularensis (strain FSC 198), this protein is Small ribosomal subunit protein bS21A.